The primary structure comprises 285 residues: MLNNFERVQILSDALPFVQRFHGRTLVVKYGGSAMKNVYLKSKIIEDILFLSYIGIKVVIVHGGGPMINHWLKQVNIQPKFFNGIRVTDKDTMELVEMVLVGKVNKDLVTLLNRSSNLAVGLSGKDANLVVASSFFPDQKDNYTGKVQQVNIEIVNLLLSSGYIPVVASVASDLNGQAYNINADSVAGAIAECLNAEKLILLTDTPGIMSDINDPSSLIKYLNISQLEELKSQKIILGGMIPKVDCCIKALQGNVSSAHIIDGSVEHALLLEILTSAGIGSMLVL.

Residues 64–65, Arg-86, and Asn-180 contribute to the substrate site; that span reads GG.

The protein belongs to the acetylglutamate kinase family. ArgB subfamily.

The protein resides in the plastid. Its subcellular location is the chloroplast. The enzyme catalyses N-acetyl-L-glutamate + ATP = N-acetyl-L-glutamyl 5-phosphate + ADP. It functions in the pathway amino-acid biosynthesis; L-arginine biosynthesis; N(2)-acetyl-L-ornithine from L-glutamate: step 2/4. Catalyzes the ATP-dependent phosphorylation of N-acetyl-L-glutamate. This Gracilaria tenuistipitata var. liui (Red alga) protein is Acetylglutamate kinase.